We begin with the raw amino-acid sequence, 485 residues long: MIKDLENEIYKSRKNLNNILVLFDYIDLSNHSIDEVNDAAAALCRVYCYLSRNGLLKRPKEDDSSANAQVKNWVCDNYINYTEKLTEIFSMANVEALQVSFLTMTMRLCKAESQMDENGTFRNQFYIRFCLELLSSSQLSDICIKDFVTSYLVPYDDVRFFFYKNSKKVISSLIESSKTDDPMANLDIVAFNTIRILSAIPSPLPSSSTSSWADEPSPSSTETSSIKRAFQESWLSALSLPLSVNLYKQVLNVIHKRVIPFLQKPNLLMDFLTDAYNSHHAVSLLALNGLFTLMISHNLDYPLFYPKLYALLDRNLLYLKTRSRFFRLLDLFLSSTHLPATLIASFIKRLARLALTAPPGAIAIVIPFIYNCLQRHPTCMQMLHRSSAESGDSFDFDQPDPLLTGAIESSLWELSTLQNHYYSNIASLASIMSQKFTKPRYELEDFLDHGYATMCDAELRRPLKNEPPIEFEKRTLASGLEKSWI.

Transmembrane regions (helical) follow at residues 284-304 (LLAL…YPLF), 328-348 (LLDL…SFIK), and 353-373 (LALT…YNCL).

It belongs to the CBF/MAK21 family.

It is found in the membrane. This is an uncharacterized protein from Schizosaccharomyces pombe (strain 972 / ATCC 24843) (Fission yeast).